Reading from the N-terminus, the 156-residue chain is Cyanate hydratase (156 aa).

Catalysis depends on residues R96, E99, and S122.

Belongs to the cyanase family.

The catalysed reaction is cyanate + hydrogencarbonate + 3 H(+) = NH4(+) + 2 CO2. In terms of biological role, catalyzes the reaction of cyanate with bicarbonate to produce ammonia and carbon dioxide. This Burkholderia orbicola (strain MC0-3) protein is Cyanate hydratase.